The chain runs to 427 residues: Putative F-box protein At4g10740 (427 aa).

One can recognise an F-box domain in the interval 2-47; it reads RTTMSNLPKELVEDIVSRVPLHCLRAMRLTCKNWNALLESQSFKKM.

The sequence is that of Putative F-box protein At4g10740 from Arabidopsis thaliana (Mouse-ear cress).